Reading from the N-terminus, the 413-residue chain is Gamma-glutamyl phosphate reductase (413 aa).

Belongs to the gamma-glutamyl phosphate reductase family.

It localises to the cytoplasm. It carries out the reaction L-glutamate 5-semialdehyde + phosphate + NADP(+) = L-glutamyl 5-phosphate + NADPH + H(+). It functions in the pathway amino-acid biosynthesis; L-proline biosynthesis; L-glutamate 5-semialdehyde from L-glutamate: step 2/2. Catalyzes the NADPH-dependent reduction of L-glutamate 5-phosphate into L-glutamate 5-semialdehyde and phosphate. The product spontaneously undergoes cyclization to form 1-pyrroline-5-carboxylate. This Rhodococcus jostii (strain RHA1) protein is Gamma-glutamyl phosphate reductase.